Reading from the N-terminus, the 263-residue chain is Hydroxyacylglutathione hydrolase (263 aa).

The Zn(2+) site is built by His-55, His-57, Asp-59, His-60, His-117, Asp-134, and His-172.

Belongs to the metallo-beta-lactamase superfamily. Glyoxalase II family. In terms of assembly, monomer. The cofactor is Zn(2+).

The enzyme catalyses an S-(2-hydroxyacyl)glutathione + H2O = a 2-hydroxy carboxylate + glutathione + H(+). Its pathway is secondary metabolite metabolism; methylglyoxal degradation; (R)-lactate from methylglyoxal: step 2/2. In terms of biological role, thiolesterase that catalyzes the hydrolysis of S-D-lactoyl-glutathione to form glutathione and D-lactic acid. This is Hydroxyacylglutathione hydrolase from Shewanella baltica (strain OS223).